Here is a 692-residue protein sequence, read N- to C-terminus: Elongation factor G (692 aa).

Positions 8–282 (EKTRNIGIMA…GVVDYLPSPV (275 aa)) constitute a tr-type G domain. Residues 17–24 (AHIDAGKT), 81–85 (DTPGH), and 135–138 (NKMD) contribute to the GTP site.

This sequence belongs to the TRAFAC class translation factor GTPase superfamily. Classic translation factor GTPase family. EF-G/EF-2 subfamily.

Its subcellular location is the cytoplasm. Its function is as follows. Catalyzes the GTP-dependent ribosomal translocation step during translation elongation. During this step, the ribosome changes from the pre-translocational (PRE) to the post-translocational (POST) state as the newly formed A-site-bound peptidyl-tRNA and P-site-bound deacylated tRNA move to the P and E sites, respectively. Catalyzes the coordinated movement of the two tRNA molecules, the mRNA and conformational changes in the ribosome. The protein is Elongation factor G of Geobacillus kaustophilus (strain HTA426).